The chain runs to 304 residues: Transcription factor BEE 2 (304 aa).

The tract at residues 74–132 (FHMEPVKNNGHSRAITLQNKRKPEGKTEKREKKKIKAEDETEPSMKGKSNMSNTETSSE) is disordered. The span at 82-91 (NGHSRAITLQ) shows a compositional bias: polar residues. The span at 94–103 (RKPEGKTEKR) shows a compositional bias: basic and acidic residues. The span at 120–132 (GKSNMSNTETSSE) shows a compositional bias: polar residues. The region spanning 147–197 (EATDRHSLAERARREKISKKMKCLQDIVPGCNKVTGKAGMLDEIINYVQSL) is the bHLH domain.

As to quaternary structure, homodimer. In terms of tissue distribution, expressed in stems and flowers.

Its subcellular location is the nucleus. Its function is as follows. Positive regulator of brassinosteroid signaling. This Arabidopsis thaliana (Mouse-ear cress) protein is Transcription factor BEE 2 (BEE2).